Reading from the N-terminus, the 180-residue chain is NAD(P)H-quinone oxidoreductase subunit I, chloroplastic (180 aa).

2 consecutive 4Fe-4S ferredoxin-type domains span residues 55–84 and 95–124; these read GRIH…VDWR and LNYS…MTEE. C64, C67, C70, C74, C104, C107, C110, and C114 together coordinate [4Fe-4S] cluster.

The protein belongs to the complex I 23 kDa subunit family. As to quaternary structure, NDH is composed of at least 16 different subunits, 5 of which are encoded in the nucleus. Requires [4Fe-4S] cluster as cofactor.

Its subcellular location is the plastid. It localises to the chloroplast thylakoid membrane. It catalyses the reaction a plastoquinone + NADH + (n+1) H(+)(in) = a plastoquinol + NAD(+) + n H(+)(out). The catalysed reaction is a plastoquinone + NADPH + (n+1) H(+)(in) = a plastoquinol + NADP(+) + n H(+)(out). NDH shuttles electrons from NAD(P)H:plastoquinone, via FMN and iron-sulfur (Fe-S) centers, to quinones in the photosynthetic chain and possibly in a chloroplast respiratory chain. The immediate electron acceptor for the enzyme in this species is believed to be plastoquinone. Couples the redox reaction to proton translocation, and thus conserves the redox energy in a proton gradient. The sequence is that of NAD(P)H-quinone oxidoreductase subunit I, chloroplastic from Dioscorea elephantipes (Elephant's foot yam).